Here is a 141-residue protein sequence, read N- to C-terminus: Metallothiol transferase FosB (141 aa).

The VOC domain maps to 5-120 (SINHLLFSVS…DGHKFEFHTG (116 aa)). Residues His8, His67, and Glu116 each coordinate Mg(2+). The Proton donor/acceptor role is filled by Glu116.

This sequence belongs to the fosfomycin resistance protein family. FosB subfamily. Homodimer. Mg(2+) serves as cofactor.

It is found in the cytoplasm. In terms of biological role, metallothiol transferase which confers resistance to fosfomycin by catalyzing the addition of a thiol cofactor to fosfomycin. L-cysteine is probably the physiological thiol donor. The sequence is that of Metallothiol transferase FosB from Lysinibacillus sphaericus (strain C3-41).